Here is a 505-residue protein sequence, read N- to C-terminus: L-arabinose isomerase (505 aa).

Residues Glu308, Glu335, His352, and His453 each coordinate Mn(2+).

It belongs to the arabinose isomerase family. The cofactor is Mn(2+).

The catalysed reaction is beta-L-arabinopyranose = L-ribulose. It functions in the pathway carbohydrate degradation; L-arabinose degradation via L-ribulose; D-xylulose 5-phosphate from L-arabinose (bacterial route): step 1/3. Functionally, catalyzes the conversion of L-arabinose to L-ribulose. This chain is L-arabinose isomerase, found in Bifidobacterium animalis subsp. lactis (strain AD011).